The primary structure comprises 108 residues: Curli assembly protein CsgC (108 aa).

The N-terminal stretch at 1–8 (MHTLLLLA) is a signal peptide.

It belongs to the CsgC/AgfC family.

Its subcellular location is the periplasm. Plays a role in the extracellular assembly of CsgA into thin aggregative fimbriae (Tafi) fibers. Assembly may also require CsgE. Tafi are thought to be assembled via an extracellular nucleation-precipitation (ENP) pathway, and possibly also via an intracellular non-CsgC-dependent pathway. In Salmonella arizonae (strain ATCC BAA-731 / CDC346-86 / RSK2980), this protein is Curli assembly protein CsgC.